Reading from the N-terminus, the 234-residue chain is Peptidase E (234 aa).

Residues serine 123, aspartate 138, and histidine 160 each act as charge relay system in the active site.

The protein belongs to the peptidase S51 family.

Its subcellular location is the cytoplasm. The catalysed reaction is Dipeptidase E catalyzes the hydrolysis of dipeptides Asp-|-Xaa. It does not act on peptides with N-terminal Glu, Asn or Gln, nor does it cleave isoaspartyl peptides.. Functionally, hydrolyzes dipeptides containing N-terminal aspartate residues. May play a role in allowing the cell to use peptide aspartate to spare carbon otherwise required for the synthesis of the aspartate family of amino acids. This Actinobacillus pleuropneumoniae serotype 3 (strain JL03) protein is Peptidase E.